The sequence spans 488 residues: Catalase (488 aa).

The disordered stretch occupies residues M1–A24. Residues L7–T23 show a composition bias toward polar residues. Active-site residues include H55 and N128. A heme-binding site is contributed by Y338.

It belongs to the catalase family. The cofactor is heme.

Its subcellular location is the cytoplasm. It carries out the reaction 2 H2O2 = O2 + 2 H2O. Decomposes hydrogen peroxide into water and oxygen; serves to protect cells from the toxic effects of hydrogen peroxide. In Listeria innocua serovar 6a (strain ATCC BAA-680 / CLIP 11262), this protein is Catalase (kat).